Here is a 445-residue protein sequence, read N- to C-terminus: ATP-dependent protease ATPase subunit HslU (445 aa).

ATP is bound by residues I18, 60-65, D258, E323, and R395; that span reads GVGKTE.

The protein belongs to the ClpX chaperone family. HslU subfamily. A double ring-shaped homohexamer of HslV is capped on each side by a ring-shaped HslU homohexamer. The assembly of the HslU/HslV complex is dependent on binding of ATP.

It localises to the cytoplasm. Its function is as follows. ATPase subunit of a proteasome-like degradation complex; this subunit has chaperone activity. The binding of ATP and its subsequent hydrolysis by HslU are essential for unfolding of protein substrates subsequently hydrolyzed by HslV. HslU recognizes the N-terminal part of its protein substrates and unfolds these before they are guided to HslV for hydrolysis. The polypeptide is ATP-dependent protease ATPase subunit HslU (Syntrophotalea carbinolica (strain DSM 2380 / NBRC 103641 / GraBd1) (Pelobacter carbinolicus)).